A 126-amino-acid chain; its full sequence is Large ribosomal subunit protein uL22 (126 aa).

This sequence belongs to the universal ribosomal protein uL22 family. Part of the 50S ribosomal subunit.

In terms of biological role, this protein binds specifically to 23S rRNA; its binding is stimulated by other ribosomal proteins, e.g. L4, L17, and L20. It is important during the early stages of 50S assembly. It makes multiple contacts with different domains of the 23S rRNA in the assembled 50S subunit and ribosome. The globular domain of the protein is located near the polypeptide exit tunnel on the outside of the subunit, while an extended beta-hairpin is found that lines the wall of the exit tunnel in the center of the 70S ribosome. In Caulobacter vibrioides (strain ATCC 19089 / CIP 103742 / CB 15) (Caulobacter crescentus), this protein is Large ribosomal subunit protein uL22.